The primary structure comprises 93 residues: Protein FMP16, mitochondrial (93 aa).

The transit peptide at 1–25 (MLRTTFLRTPRQLMRKSPRASFSIV) directs the protein to the mitochondrion. The tract at residues 30–93 (FPHLKNNQDE…EQNRPDDGVY (64 aa)) is disordered. The span at 35 to 93 (NNQDEAEKKEQGLFDSNKKRLDTLEHGKNPDYKQPGMEDLKKKGDDARIEQNRPDDGVY) shows a compositional bias: basic and acidic residues.

It localises to the mitochondrion. This is Protein FMP16, mitochondrial (FMP16) from Saccharomyces cerevisiae (strain ATCC 204508 / S288c) (Baker's yeast).